A 595-amino-acid polypeptide reads, in one-letter code: MANNYKDLFIDIDSFDETNIIYVKPLLFFEASRHMGIYYEKEIIMKKPVVNPSNKSNKSKKLNKTNKSNKSNKSDELKKSNKSNKSSALKKSNKSSNKSSNKSSNKSSNKSSNKSSNKSSNKFPDKSDKSDSSNDSDNSDDSDDSSNDSSEFETIKTKKKQKIIIKTPKMIVPFGVKEFDNNGRKNYQMSLSFSTMTNLYNEEEIKKFHGFIKLTDKINEETIMDYKDTWKLPKGLKYKRSLQRLSKDYPHHININMPHDEKMGFMFNVYDEKGGKSKPDIIDKRSIVSAIIELTDLKFTDTEFRANWTLLQVRKFKPYSPIQEFFMTECFICDEDNPEDTVYSKLIEKYQQTLKTPITFPQYPQMNPSHSSSGYAIPYITPYQSNYPIPYPPTYPTTYPTTPLFSEPTIPKPPQQPTTEPPSGFKPPSLSELLSAKKLLKPTKTTVKGVTEGKVVESDDHTSVADIPPPPPPPPSISSDNSSPNKSVKSSTKSSTKSSTKSSTKSSTKSSTKSPSKTPVKSPIKSSSKLSDKKSPTKKIESSGESDSESDSESDSKTTKKSTNKIKKITNNKLENSNTKNNKKFSKKKTISLDK.

Disordered stretches follow at residues 50 to 159 (VNPS…KTKK), 398 to 430 (TYPT…PPSL), and 450 to 595 (VTEG…SLDK). Residues 83-122 (SNKSSALKKSNKSSNKSSNKSSNKSSNKSSNKSSNKSSNK) are compositionally biased toward low complexity. The span at 123 to 132 (FPDKSDKSDS) shows a compositional bias: basic and acidic residues. The span at 137-146 (DNSDDSDDSS) shows a compositional bias: acidic residues. The segment covering 398 to 409 (TYPTTPLFSEPT) has biased composition (low complexity). Positions 410–420 (IPKPPQQPTTE) are enriched in pro residues. Residues 421-430 (PPSGFKPPSL) are compositionally biased toward low complexity. The span at 454 to 463 (KVVESDDHTS) shows a compositional bias: basic and acidic residues. The span at 467–476 (IPPPPPPPPS) shows a compositional bias: pro residues. A compositionally biased stretch (low complexity) spans 477–529 (ISSDNSSPNKSVKSSTKSSTKSSTKSSTKSSTKSSTKSPSKTPVKSPIKSSSK). Residues 530–542 (LSDKKSPTKKIES) show a composition bias toward basic and acidic residues. Residues 544–553 (GESDSESDSE) are compositionally biased toward acidic residues. A compositionally biased stretch (basic residues) spans 559 to 570 (TKKSTNKIKKIT). Positions 571 to 580 (NNKLENSNTK) are enriched in low complexity. Over residues 581–595 (NNKKFSKKKTISLDK) the composition is skewed to basic residues.

This is an uncharacterized protein from Acanthamoeba polyphaga mimivirus (APMV).